A 119-amino-acid polypeptide reads, in one-letter code: MGLAPSLATLAIALVFLGISLIFLVPAMVQGLYSIVSGVFSVASSVSNETGCPQSTEVVQLSNQTASISVPSQYAGIYTLYLSFISFVGSIFTDPIALIMLILVSLIITLFAFYYKNQG.

The next 3 helical transmembrane spans lie at 9 to 29, 73 to 93, and 95 to 115; these read TLAIALVFLGISLIFLVPAMV, QYAGIYTLYLSFISFVGSIFT, and PIALIMLILVSLIITLFAFYY.

It localises to the host membrane. The sequence is that of Putative transmembrane protein ORF119 from Acidianus convivator (ATV).